The sequence spans 65 residues: Small ribosomal subunit protein bS21 (65 aa).

Residues 44–65 (DDRLKRSRGKRRAQRANEERNS) are disordered. Residues 48–57 (KRSRGKRRAQ) show a composition bias toward basic residues.

It belongs to the bacterial ribosomal protein bS21 family.

This is Small ribosomal subunit protein bS21 from Prosthecochloris aestuarii (strain DSM 271 / SK 413).